We begin with the raw amino-acid sequence, 99 residues long: NADH-ubiquinone oxidoreductase chain 4L (99 aa).

Helical transmembrane passes span 5 to 25 (IITA…GFII), 30 to 50 (ILLL…IIIC), and 65 to 85 (LYIL…LVLF).

It belongs to the complex I subunit 4L family.

The protein localises to the mitochondrion membrane. The catalysed reaction is a ubiquinone + NADH + 5 H(+)(in) = a ubiquinol + NAD(+) + 4 H(+)(out). Core subunit of the mitochondrial membrane respiratory chain NADH dehydrogenase (Complex I) that is believed to belong to the minimal assembly required for catalysis. Complex I functions in the transfer of electrons from NADH to the respiratory chain. The immediate electron acceptor for the enzyme is believed to be ubiquinone. The polypeptide is NADH-ubiquinone oxidoreductase chain 4L (ND4L) (Allomyces macrogynus).